The primary structure comprises 1433 residues: DNA-directed RNA polymerase subunit beta' (1433 aa).

Zn(2+) contacts are provided by cysteine 60, cysteine 62, cysteine 75, and cysteine 78. Positions 449, 451, and 453 each coordinate Mg(2+). Positions 777, 851, 858, and 861 each coordinate Zn(2+). 2 stretches are compositionally biased toward acidic residues: residues 1383–1393 and 1411–1433; these read DSEEEEEELSE and EEDEDEDELEEEADDSDDEDDDD. The interval 1383 to 1433 is disordered; the sequence is DSEEEEEELSELSEAAPVSTATLSKLVAEEDEDEDELEEEADDSDDEDDDD.

The protein belongs to the RNA polymerase beta' chain family. As to quaternary structure, the RNAP catalytic core consists of 2 alpha, 1 beta, 1 beta' and 1 omega subunit. When a sigma factor is associated with the core the holoenzyme is formed, which can initiate transcription. It depends on Mg(2+) as a cofactor. The cofactor is Zn(2+).

The catalysed reaction is RNA(n) + a ribonucleoside 5'-triphosphate = RNA(n+1) + diphosphate. In terms of biological role, DNA-dependent RNA polymerase catalyzes the transcription of DNA into RNA using the four ribonucleoside triphosphates as substrates. The protein is DNA-directed RNA polymerase subunit beta' of Leptospira biflexa serovar Patoc (strain Patoc 1 / Ames).